A 1029-amino-acid polypeptide reads, in one-letter code: Putative B3 domain-containing protein Os03g0621600 (1029 aa).

DNA-binding regions (TF-B3) lie at residues 147-240, 339-430, and 450-543; these read DTYF…FDPS, VAVM…RKMK, and EKYF…FDPS. A disordered region spans residues 572-605; sequence TSYHDQPKGNKHWMQKDSSSKGNKIGNTRSSNTP. Positions 591–605 are enriched in polar residues; the sequence is SKGNKIGNTRSSNTP. A DNA-binding region (TF-B3 4) is located at residues 731–824; it reads YKNFFKVMIG…KLKVLIFGPS (94 aa). Positions 852–867 are enriched in polar residues; that stretch reads SSNSHDLPVKSPQNVS. Positions 852–882 are disordered; that stretch reads SSNSHDLPVKSPQNVSKSEKQWDSSEQENDT. The segment at residues 934–1029 is a DNA-binding region (TF-B3 5); sequence GCILRKSRVH…SMNVHIIPKK (96 aa).

The protein resides in the nucleus. The polypeptide is Putative B3 domain-containing protein Os03g0621600 (Oryza sativa subsp. japonica (Rice)).